Consider the following 874-residue polypeptide: Alanine--tRNA ligase (874 aa).

His-562, His-566, Cys-663, and His-667 together coordinate Zn(2+).

Belongs to the class-II aminoacyl-tRNA synthetase family. Requires Zn(2+) as cofactor.

It is found in the cytoplasm. It catalyses the reaction tRNA(Ala) + L-alanine + ATP = L-alanyl-tRNA(Ala) + AMP + diphosphate. Functionally, catalyzes the attachment of alanine to tRNA(Ala) in a two-step reaction: alanine is first activated by ATP to form Ala-AMP and then transferred to the acceptor end of tRNA(Ala). Also edits incorrectly charged Ser-tRNA(Ala) and Gly-tRNA(Ala) via its editing domain. This Bordetella parapertussis (strain 12822 / ATCC BAA-587 / NCTC 13253) protein is Alanine--tRNA ligase.